Reading from the N-terminus, the 95-residue chain is MSVTRKDVDYIAELARLSFTDEEASRMTDELNSILHYVEKLGELDTEGVLPLSNIHDQKNVLRDDVERPSISNAEALQNAPDRQDRFFKVPKVIG.

It belongs to the GatC family. In terms of assembly, heterotrimer of A, B and C subunits.

The catalysed reaction is L-glutamyl-tRNA(Gln) + L-glutamine + ATP + H2O = L-glutaminyl-tRNA(Gln) + L-glutamate + ADP + phosphate + H(+). It catalyses the reaction L-aspartyl-tRNA(Asn) + L-glutamine + ATP + H2O = L-asparaginyl-tRNA(Asn) + L-glutamate + ADP + phosphate + 2 H(+). In terms of biological role, allows the formation of correctly charged Asn-tRNA(Asn) or Gln-tRNA(Gln) through the transamidation of misacylated Asp-tRNA(Asn) or Glu-tRNA(Gln) in organisms which lack either or both of asparaginyl-tRNA or glutaminyl-tRNA synthetases. The reaction takes place in the presence of glutamine and ATP through an activated phospho-Asp-tRNA(Asn) or phospho-Glu-tRNA(Gln). The chain is Aspartyl/glutamyl-tRNA(Asn/Gln) amidotransferase subunit C from Chlorobium luteolum (strain DSM 273 / BCRC 81028 / 2530) (Pelodictyon luteolum).